The primary structure comprises 581 residues: Sulfate adenylyltransferase (581 aa).

Positions 1–176 (MANAPHGGVL…VQAIQAPTHF (176 aa)) are N-terminal. Positions 177–401 (DYVPLRYTPA…LRESYPPRPQ (225 aa)) are catalytic. Gln204 serves as a coordination point for sulfate. ATP contacts are provided by residues 204–207 (QTRN) and 298–301 (GRDH). Catalysis depends on residues Thr205, Arg206, and Asn207. Residue Arg206 coordinates sulfate. Ala302 is a binding site for sulfate. Residue Met340 participates in ATP binding. The tract at residues 402–581 (QGFTILLTGL…IMILESQNLV (180 aa)) is allosteric regulation domain; adenylyl-sulfate kinase-like. 3'-phosphoadenylyl sulfate contacts are provided by residues 441 to 444 (EELR), 486 to 487 (TA), and Arg526.

This sequence in the N-terminal section; belongs to the sulfate adenylyltransferase family. The protein in the C-terminal section; belongs to the APS kinase family. Homohexamer. Dimer of trimers.

The protein localises to the cytoplasm. It catalyses the reaction sulfate + ATP + H(+) = adenosine 5'-phosphosulfate + diphosphate. The protein operates within sulfur metabolism; hydrogen sulfide biosynthesis; sulfite from sulfate: step 1/3. Allosterically inhibited by 3'-phosphoadenosine 5'-phosphosulfate (PAPS). In terms of biological role, catalyzes the first intracellular reaction of sulfate assimilation, forming adenosine-5'-phosphosulfate (APS) from inorganic sulfate and ATP. Plays an important role in sulfate activation as a component of the biosynthesis pathway of sulfur-containing amino acids. This is Sulfate adenylyltransferase from Cryptococcus neoformans var. grubii serotype A (strain H99 / ATCC 208821 / CBS 10515 / FGSC 9487) (Filobasidiella neoformans var. grubii).